Reading from the N-terminus, the 168-residue chain is Peptide deformylase (168 aa).

Cys92 and His134 together coordinate Fe cation. Residue Glu135 is part of the active site. Residue His138 participates in Fe cation binding.

Belongs to the polypeptide deformylase family. Fe(2+) serves as cofactor.

It catalyses the reaction N-terminal N-formyl-L-methionyl-[peptide] + H2O = N-terminal L-methionyl-[peptide] + formate. Its function is as follows. Removes the formyl group from the N-terminal Met of newly synthesized proteins. Requires at least a dipeptide for an efficient rate of reaction. N-terminal L-methionine is a prerequisite for activity but the enzyme has broad specificity at other positions. The polypeptide is Peptide deformylase (Pseudomonas aeruginosa (strain ATCC 15692 / DSM 22644 / CIP 104116 / JCM 14847 / LMG 12228 / 1C / PRS 101 / PAO1)).